A 756-amino-acid chain; its full sequence is ATP-dependent 6-phosphofructokinase 2 (756 aa).

Residues 1–393 are N-terminal catalytic PFK domain 1; the sequence is MEQKFKKGKD…KQTYLNFVSI (393 aa). Residues glycine 20, 81-82, and 111-114 each bind ATP; these read RC and GDGS. Aspartate 112 contributes to the Mg(2+) binding site. Residues 157–159, arginine 194, 201–203, glutamate 257, arginine 285, and 291–294 each bind substrate; these read SID, MGR, and HLQR. The Proton acceptor role is filled by aspartate 159. An interdomain linker region spans residues 394 to 404; it reads PLSTTMPSRTK. The C-terminal regulatory PFK domain 2 stretch occupies residues 405–756; that stretch reads TFAVVHIGSP…KKPQEAVLSS (352 aa). Beta-D-fructose 2,6-bisphosphate-binding positions include arginine 474, 530-534, 575-577, glutamate 632, arginine 658, and 664-667; these read TISNN, MGS, and YSQL.

This sequence belongs to the phosphofructokinase type A (PFKA) family. ATP-dependent PFK group I subfamily. Eukaryotic two domain clade 'E' sub-subfamily. In terms of assembly, homotetramer. It depends on Mg(2+) as a cofactor.

Its subcellular location is the cytoplasm. The catalysed reaction is beta-D-fructose 6-phosphate + ATP = beta-D-fructose 1,6-bisphosphate + ADP + H(+). It participates in carbohydrate degradation; glycolysis; D-glyceraldehyde 3-phosphate and glycerone phosphate from D-glucose: step 3/4. With respect to regulation, allosterically activated by ADP, AMP, or fructose 2,6-bisphosphate, and allosterically inhibited by ATP or citrate. Its function is as follows. Catalyzes the phosphorylation of D-fructose 6-phosphate to fructose 1,6-bisphosphate by ATP, the first committing step of glycolysis. This chain is ATP-dependent 6-phosphofructokinase 2, found in Caenorhabditis elegans.